A 208-amino-acid chain; its full sequence is Small ribosomal subunit protein uS4 (208 aa).

The S4 RNA-binding domain occupies 98 to 161; sequence RRLDNVIYRL…RKIPVLAEAQ (64 aa).

It belongs to the universal ribosomal protein uS4 family. As to quaternary structure, part of the 30S ribosomal subunit. Contacts protein S5. The interaction surface between S4 and S5 is involved in control of translational fidelity.

One of the primary rRNA binding proteins, it binds directly to 16S rRNA where it nucleates assembly of the body of the 30S subunit. In terms of biological role, with S5 and S12 plays an important role in translational accuracy. This is Small ribosomal subunit protein uS4 from Nitratidesulfovibrio vulgaris (strain ATCC 29579 / DSM 644 / CCUG 34227 / NCIMB 8303 / VKM B-1760 / Hildenborough) (Desulfovibrio vulgaris).